Reading from the N-terminus, the 361-residue chain is Phospho-N-acetylmuramoyl-pentapeptide-transferase (361 aa).

Transmembrane regions (helical) follow at residues A26–R46, T73–L93, Y97–Y117, Y134–M154, V168–S188, G200–S220, T237–F257, V264–I284, I289–V309, and I340–I360.

It belongs to the glycosyltransferase 4 family. MraY subfamily. Mg(2+) serves as cofactor.

It is found in the cell inner membrane. The enzyme catalyses UDP-N-acetyl-alpha-D-muramoyl-L-alanyl-gamma-D-glutamyl-meso-2,6-diaminopimeloyl-D-alanyl-D-alanine + di-trans,octa-cis-undecaprenyl phosphate = di-trans,octa-cis-undecaprenyl diphospho-N-acetyl-alpha-D-muramoyl-L-alanyl-D-glutamyl-meso-2,6-diaminopimeloyl-D-alanyl-D-alanine + UMP. It functions in the pathway cell wall biogenesis; peptidoglycan biosynthesis. Catalyzes the initial step of the lipid cycle reactions in the biosynthesis of the cell wall peptidoglycan: transfers peptidoglycan precursor phospho-MurNAc-pentapeptide from UDP-MurNAc-pentapeptide onto the lipid carrier undecaprenyl phosphate, yielding undecaprenyl-pyrophosphoryl-MurNAc-pentapeptide, known as lipid I. This is Phospho-N-acetylmuramoyl-pentapeptide-transferase from Marinobacter nauticus (strain ATCC 700491 / DSM 11845 / VT8) (Marinobacter aquaeolei).